The following is a 228-amino-acid chain: Trichome differentiation protein GL1 (228 aa).

HTH myb-type domains are found at residues 11-63 (NQEY…MNYL) and 64-118 (SPNV…SKKL). DNA-binding regions (H-T-H motif) lie at residues 39–63 (WNRIVRKTGLKRCGKSCRLRWMNYL) and 91–114 (WSLIAKRVPGRTDNQVKNYWNTHL).

Homodimer and heterodimer with MYB82. Interacts directly with GL3 and BHLH2. Part of a complex made of GL1, GL3 or BHLH2, and TTG1. Also interacts with BHLH2/EGL3/MYC146 and BHLH12/MYC1. Interacts with MYB82. Expressed in leaves, stems and flowers. Expressed in trichome cells and in leaf primordia.

Its subcellular location is the nucleus. Its function is as follows. Transcription activator, when associated with BHLH2/EGL3/MYC146 or BHLH12/MYC1. Involved in epidermal cell fate specification in leaves. Together with TTG1 and GL3, promotes trichome formation and endoreplication. Regulates the production of a signal that induces hair (trichome) precursor cells on leaf primordia to differentiate. Binds to the WER-binding sites (WBS) promoter regions and activates the transcription of target genes. The chain is Trichome differentiation protein GL1 from Arabidopsis thaliana (Mouse-ear cress).